The primary structure comprises 94 residues: Co-chaperonin GroES (94 aa).

The protein belongs to the GroES chaperonin family. In terms of assembly, heptamer of 7 subunits arranged in a ring. Interacts with the chaperonin GroEL.

The protein localises to the cytoplasm. In terms of biological role, together with the chaperonin GroEL, plays an essential role in assisting protein folding. The GroEL-GroES system forms a nano-cage that allows encapsulation of the non-native substrate proteins and provides a physical environment optimized to promote and accelerate protein folding. GroES binds to the apical surface of the GroEL ring, thereby capping the opening of the GroEL channel. The sequence is that of Co-chaperonin GroES from Streptococcus pneumoniae (strain CGSP14).